Here is a 290-residue protein sequence, read N- to C-terminus: Nucleotide-binding protein Aave_3603 (290 aa).

13–20 (GMSGSGKS) is a binding site for ATP. Position 62–65 (62–65 (DVRS)) interacts with GTP.

Belongs to the RapZ-like family.

Its function is as follows. Displays ATPase and GTPase activities. In Paracidovorax citrulli (strain AAC00-1) (Acidovorax citrulli), this protein is Nucleotide-binding protein Aave_3603.